A 289-amino-acid chain; its full sequence is Ribosomal protein L11 methyltransferase (289 aa).

Residues threonine 142, glycine 163, aspartate 185, and asparagine 226 each coordinate S-adenosyl-L-methionine.

Belongs to the methyltransferase superfamily. PrmA family.

It localises to the cytoplasm. It catalyses the reaction L-lysyl-[protein] + 3 S-adenosyl-L-methionine = N(6),N(6),N(6)-trimethyl-L-lysyl-[protein] + 3 S-adenosyl-L-homocysteine + 3 H(+). In terms of biological role, methylates ribosomal protein L11. The sequence is that of Ribosomal protein L11 methyltransferase from Legionella pneumophila (strain Lens).